The sequence spans 216 residues: Holliday junction branch migration complex subunit RuvA (216 aa).

A domain I region spans residues 1–64 (MISFIKGVLI…EDAQQLYGFK (64 aa)). Positions 65-143 (SKVDKKVFQE…KMANEIYAQT (79 aa)) are domain II. Residues 144–163 (SGTTTTSQDSQAQQAPTSVV) are flexible linker. Residues 164–216 (LANSIFNESVDALLALGYKQKDAEKMARSAMGDATTAAEVIRKALQGSIKSKR) form a domain III region.

It belongs to the RuvA family. In terms of assembly, homotetramer. Forms an RuvA(8)-RuvB(12)-Holliday junction (HJ) complex. HJ DNA is sandwiched between 2 RuvA tetramers; dsDNA enters through RuvA and exits via RuvB. An RuvB hexamer assembles on each DNA strand where it exits the tetramer. Each RuvB hexamer is contacted by two RuvA subunits (via domain III) on 2 adjacent RuvB subunits; this complex drives branch migration. In the full resolvosome a probable DNA-RuvA(4)-RuvB(12)-RuvC(2) complex forms which resolves the HJ.

The protein resides in the cytoplasm. The RuvA-RuvB-RuvC complex processes Holliday junction (HJ) DNA during genetic recombination and DNA repair, while the RuvA-RuvB complex plays an important role in the rescue of blocked DNA replication forks via replication fork reversal (RFR). RuvA specifically binds to HJ cruciform DNA, conferring on it an open structure. The RuvB hexamer acts as an ATP-dependent pump, pulling dsDNA into and through the RuvAB complex. HJ branch migration allows RuvC to scan DNA until it finds its consensus sequence, where it cleaves and resolves the cruciform DNA. In Francisella tularensis subsp. mediasiatica (strain FSC147), this protein is Holliday junction branch migration complex subunit RuvA.